A 434-amino-acid polypeptide reads, in one-letter code: MESRGKILMERYELGRLLGKGTFGKVHYARNLESNQSVAIKMMDKQQILKVGLSEQIRREITTMRLVAHKNIVQLHEVMATRNKIYFVMEYVKGGELFEKVAKRGKLTEVVAHKYFQQLISAVDYCHSRGVYHRDLKPENLLLDENENLKVSDFGLSALSESKRQDGLLHTTCGTPAYVAPEVISKIGYDGAKSDIWSCGVILFVLVAGYLPFQGPNLMEMYRKIQHGEFRCPGWFSRKLQKLLYKIMDPNPSTRISIQKIKESTWFRKGPEENRILKERTLNENTTKNVAPVLGVRRKKNAHEDVKPMSVTNLNAFEIISFSKGFDLSGMFIVKEWRNEARFTSDKSASTIISKLEDVAKALNLRVRKKDNGVVKMQGRKEGRNGVLQFDIEIFEVTTSYHIIEMKQTSGDSLEYRQLLEEGIRPALKDIVLA.

Residues tyrosine 12–phenylalanine 267 enclose the Protein kinase domain. Residues leucine 18 to valine 26 and lysine 41 contribute to the ATP site. The active-site Proton acceptor is aspartate 135. The interval aspartate 153–glutamate 182 is activation loop. The NAF domain maps to arginine 298–isoleucine 333. Positions arginine 338–valine 367 are PPI.

This sequence belongs to the protein kinase superfamily. CAMK Ser/Thr protein kinase family. SNF1 subfamily. Mn(2+) serves as cofactor.

It catalyses the reaction L-seryl-[protein] + ATP = O-phospho-L-seryl-[protein] + ADP + H(+). It carries out the reaction L-threonyl-[protein] + ATP = O-phospho-L-threonyl-[protein] + ADP + H(+). Its function is as follows. Involved in salt stress tolerance. CIPK serine-threonine protein kinases interact with CBL proteins. Binding of a CBL protein to the regulatory NAF domain of CIPK protein lead to the activation of the kinase in a calcium-dependent manner. This chain is CBL-interacting protein kinase 15 (CIPK15), found in Oryza sativa subsp. japonica (Rice).